The sequence spans 328 residues: Ethanol acetyltransferase 1 (328 aa).

Residues 39–309 (PAIINIHGLL…TGHNLLLENP (271 aa)) form the AB hydrolase-1 domain. Residues S115, D139, and H302 each act as charge relay system in the active site.

It belongs to the AB hydrolase superfamily.

It localises to the mitochondrion. The catalysed reaction is ethanol + acetyl-CoA = ethyl acetate + CoA. It catalyses the reaction acetyl-CoA + H2O = acetate + CoA + H(+). It carries out the reaction ethyl acetate + H2O = ethanol + acetate + H(+). Functionally, alcohol acetyltransferase that catalyzes the synthesis of ethyl acetate from ethanol and acetyl-CoA. Can also function as a thioesterase by hydrolyzing acetyl-CoA in the absence of ethanol, as well as esterase hydrolyzing ethyl acetate. The polypeptide is Ethanol acetyltransferase 1 (Saccharomyces cerevisiae (strain ATCC 204508 / S288c) (Baker's yeast)).